The primary structure comprises 274 residues: Penicillin-insensitive murein endopeptidase (274 aa).

An N-terminal signal peptide occupies residues 1–19 (MKNTVIALLALLASAGSLA). Disulfide bonds link Cys-44–Cys-265, Cys-187–Cys-235, and Cys-216–Cys-223. Zn(2+) contacts are provided by His-110, His-113, Asp-120, Asp-147, His-150, and His-211. Residues 224 to 263 (EDQAPPPPGDGCGAELQSWFEPPKPGSTPPVKKTPPPLPP) are disordered. Residues 245 to 263 (PPKPGSTPPVKKTPPPLPP) show a composition bias toward pro residues.

This sequence belongs to the peptidase M74 family. Dimer. Zn(2+) is required as a cofactor.

Its subcellular location is the periplasm. Murein endopeptidase that cleaves the D-alanyl-meso-2,6-diamino-pimelyl amide bond that connects peptidoglycan strands. Likely plays a role in the removal of murein from the sacculus. This is Penicillin-insensitive murein endopeptidase from Klebsiella pneumoniae (strain 342).